Here is a 284-residue protein sequence, read N- to C-terminus: Diaminopimelate epimerase (284 aa).

3 residues coordinate substrate: asparagine 20, glutamine 53, and asparagine 73. The Proton donor role is filled by cysteine 82. Residues 83-84 (GN), asparagine 167, asparagine 200, and 218-219 (ER) contribute to the substrate site. Catalysis depends on cysteine 227, which acts as the Proton acceptor. A substrate-binding site is contributed by 228–229 (GS).

It belongs to the diaminopimelate epimerase family. Homodimer.

It localises to the cytoplasm. It carries out the reaction (2S,6S)-2,6-diaminopimelate = meso-2,6-diaminopimelate. It functions in the pathway amino-acid biosynthesis; L-lysine biosynthesis via DAP pathway; DL-2,6-diaminopimelate from LL-2,6-diaminopimelate: step 1/1. Its function is as follows. Catalyzes the stereoinversion of LL-2,6-diaminopimelate (L,L-DAP) to meso-diaminopimelate (meso-DAP), a precursor of L-lysine and an essential component of the bacterial peptidoglycan. The polypeptide is Diaminopimelate epimerase (Xanthomonas axonopodis pv. citri (strain 306)).